Consider the following 248-residue polypeptide: Ribonuclease PH (248 aa).

Residues R86 and 124 to 126 (GTR) contribute to the phosphate site.

This sequence belongs to the RNase PH family. As to quaternary structure, homohexameric ring arranged as a trimer of dimers.

It carries out the reaction tRNA(n+1) + phosphate = tRNA(n) + a ribonucleoside 5'-diphosphate. Its function is as follows. Phosphorolytic 3'-5' exoribonuclease that plays an important role in tRNA 3'-end maturation. Removes nucleotide residues following the 3'-CCA terminus of tRNAs; can also add nucleotides to the ends of RNA molecules by using nucleoside diphosphates as substrates, but this may not be physiologically important. Probably plays a role in initiation of 16S rRNA degradation (leading to ribosome degradation) during starvation. This Listeria welshimeri serovar 6b (strain ATCC 35897 / DSM 20650 / CCUG 15529 / CIP 8149 / NCTC 11857 / SLCC 5334 / V8) protein is Ribonuclease PH.